The sequence spans 285 residues: Urease accessory protein UreD 1 (285 aa).

The protein belongs to the UreD family. UreD, UreF and UreG form a complex that acts as a GTP-hydrolysis-dependent molecular chaperone, activating the urease apoprotein by helping to assemble the nickel containing metallocenter of UreC. The UreE protein probably delivers the nickel.

The protein localises to the cytoplasm. In terms of biological role, required for maturation of urease via the functional incorporation of the urease nickel metallocenter. The sequence is that of Urease accessory protein UreD 1 from Pseudomonas syringae pv. tomato (strain ATCC BAA-871 / DC3000).